A 337-amino-acid polypeptide reads, in one-letter code: MRPYPIKFVSIVIPVYNERQSLPELLRRTEAACKHLNHRFEIVLVDDGSRDDSAEILQQAAERSASPFVAVILNRNYGQHAAIMAGFEQCKGDVVITLDADLQNPPEEIPRLVALAEQGYDVVGTVRSNRQDSAWRRWPSKIINVAVQRSTGVAMSDYGCMLRAYRRTIVDAMLACRERSTFIPILANSFARHTTEVLVDHAEREHGDSKYSPMRLVNLMFDLITCMTTTPLRLLSIIGFSMALLGVLFAALLIILRLIFGAPWAGDGTFVLFAVLFVFTGGQFIGMGLLGEYLGRMYSDVRARPRFFIEKVVRSSSEVVSESVDSSVTPYMNKVAP.

Helical transmembrane passes span 235-255 (LSII…LLII) and 270-290 (FVLF…MGLL).

This sequence belongs to the glycosyltransferase 2 family.

The protein localises to the cell inner membrane. The enzyme catalyses UDP-4-deoxy-4-formamido-beta-L-arabinose + di-trans,octa-cis-undecaprenyl phosphate = 4-deoxy-4-formamido-alpha-L-arabinopyranosyl di-trans,octa-cis-undecaprenyl phosphate + UDP. It participates in glycolipid biosynthesis; 4-amino-4-deoxy-alpha-L-arabinose undecaprenyl phosphate biosynthesis; 4-amino-4-deoxy-alpha-L-arabinose undecaprenyl phosphate from UDP-4-deoxy-4-formamido-beta-L-arabinose and undecaprenyl phosphate: step 1/2. It functions in the pathway bacterial outer membrane biogenesis; lipopolysaccharide biosynthesis. Functionally, catalyzes the transfer of 4-deoxy-4-formamido-L-arabinose from UDP to undecaprenyl phosphate. The modified arabinose is attached to lipid A and is required for resistance to polymyxin and cationic antimicrobial peptides. The sequence is that of Undecaprenyl-phosphate 4-deoxy-4-formamido-L-arabinose transferase from Pseudomonas savastanoi pv. phaseolicola (strain 1448A / Race 6) (Pseudomonas syringae pv. phaseolicola (strain 1448A / Race 6)).